Reading from the N-terminus, the 470-residue chain is Amino-acid permease RocC (470 aa).

12 consecutive transmembrane segments (helical) span residues 18–38 (FMIALGGVIGTGLFLGSGFTI), 44–64 (LGAIAAYIIGGFLMYLVMLCL), 90–110 (GFMIGWLYWFSWANTVGLELT), 119–139 (WLPSVPIWIWCLVFGIVIFLI), 159–179 (VAAIILFIVIGGAAVFGLIDF), 196–216 (GLFPNGVLAVMFTLVMVNFSF), 243–263 (VIWRTLFFFVLAMFVLVAILP), 281–301 (IGIPFSADIMNFVILTAILSV), 338–358 (ALLITLGISGCSLLTSVMAAE), 360–380 (VYLWCISISGMVTVVAWMSIC), 409–429 (LVPILGFCLYGCVLISLIFIP), and 433–453 (IGLYCGVPIIIFCYAYYHLSI).

The protein belongs to the amino acid-polyamine-organocation (APC) superfamily.

The protein localises to the cell membrane. Putative transport protein involved in arginine degradative pathway. Probably transports arginine or ornithine. The sequence is that of Amino-acid permease RocC (rocC) from Bacillus subtilis (strain 168).